Consider the following 312-residue polypeptide: MSAAGAADVFHRARGRTLDAFSSEKEREWTGPFYFVQGADPQFGLMKAWSTGNCDNGGDEWGQEIRLTEQAVEAINKLNPKPKFFVLCGDLVHAMPGTRWRKEQTRDLQRVLKVVDQDIPLVLVSGNHDLGNAPTAETVEEFCQTWGDDYFSFWVGGALFLVLNSQFLYDASKCPALKQAQDHWLDQQLSIAEQQQCQHAIVFQHIPLFLKSIDEDDDYFNLTKTVRQELADKFTRAGIRAVFSGHYHRNAGGTYQNLDMVVSSAIGCQLGKDTHGLRVVVVTAEKIVHRYYSLDELSKRGLDDDLRELLKE.

Residue Ser-2 is modified to Phosphoserine. The interval 47–250 (KAWSTGNCDN…AVFSGHYHRN (204 aa)) is catalytic. 3 residues coordinate a divalent metal cation: Asp-90, Asn-127, and His-246. Ser-293 bears the Phosphoserine mark.

Belongs to the metallophosphoesterase superfamily. CPPED1 family. Requires a divalent metal cation as cofactor.

It is found in the cytoplasm. The catalysed reaction is O-phospho-L-seryl-[protein] + H2O = L-seryl-[protein] + phosphate. It carries out the reaction O-phospho-L-threonyl-[protein] + H2O = L-threonyl-[protein] + phosphate. In terms of biological role, protein phosphatase that dephosphorylates AKT family kinase specifically at 'Ser-473', blocking cell cycle progression and promoting cell apoptosis. May play an inhibitory role in glucose uptake by adipocytes. This Rattus norvegicus (Rat) protein is Serine/threonine-protein phosphatase CPPED1 (Cpped1).